The sequence spans 237 residues: 7-cyano-7-deazaguanine synthase (237 aa).

9-19 is an ATP binding site; the sequence is YSGGLDSTTCL. Zn(2+) contacts are provided by Cys189, Cys199, Cys202, and Cys205.

The protein belongs to the QueC family. It depends on Zn(2+) as a cofactor.

The catalysed reaction is 7-carboxy-7-deazaguanine + NH4(+) + ATP = 7-cyano-7-deazaguanine + ADP + phosphate + H2O + H(+). Its pathway is purine metabolism; 7-cyano-7-deazaguanine biosynthesis. In terms of biological role, catalyzes the ATP-dependent conversion of 7-carboxy-7-deazaguanine (CDG) to 7-cyano-7-deazaguanine (preQ(0)). The protein is 7-cyano-7-deazaguanine synthase of Geobacter sulfurreducens (strain ATCC 51573 / DSM 12127 / PCA).